The chain runs to 225 residues: Cytidylate kinase (225 aa).

11–19 (GPAAAGKST) lines the ATP pocket.

It belongs to the cytidylate kinase family. Type 1 subfamily.

Its subcellular location is the cytoplasm. It catalyses the reaction CMP + ATP = CDP + ADP. The catalysed reaction is dCMP + ATP = dCDP + ADP. The protein is Cytidylate kinase of Anoxybacillus flavithermus (strain DSM 21510 / WK1).